The sequence spans 242 residues: Probable transcriptional regulatory protein XOO1543 (242 aa).

It belongs to the TACO1 family.

It localises to the cytoplasm. This Xanthomonas oryzae pv. oryzae (strain MAFF 311018) protein is Probable transcriptional regulatory protein XOO1543.